A 300-amino-acid chain; its full sequence is Cation-efflux pump FieF (300 aa).

A run of 4 helical transmembrane segments spans residues Ala-12–Trp-32, Ile-39–Val-59, Ala-82–Ile-102, and Pro-114–Phe-134. Zn(2+)-binding residues include Asp-45 and Asp-49. His-153 and Asp-157 together coordinate Zn(2+). Residues Ile-164–Leu-184 form a helical membrane-spanning segment.

The protein belongs to the cation diffusion facilitator (CDF) transporter (TC 2.A.4) family. FieF subfamily. Homodimer.

It is found in the cell inner membrane. The catalysed reaction is Zn(2+)(in) + H(+)(out) = Zn(2+)(out) + H(+)(in). The enzyme catalyses Cd(2+)(in) + H(+)(out) = Cd(2+)(out) + H(+)(in). It catalyses the reaction Fe(2+)(in) + H(+)(out) = Fe(2+)(out) + H(+)(in). Divalent metal cation transporter which exports Zn(2+), Cd(2+) and possibly Fe(2+). May be involved in zinc and iron detoxification by efflux. In Citrobacter koseri (strain ATCC BAA-895 / CDC 4225-83 / SGSC4696), this protein is Cation-efflux pump FieF.